The primary structure comprises 443 residues: Transcriptional adapter 2-alpha (443 aa).

Ser-6 is modified (phosphoserine). The ZZ-type zinc finger occupies 12 to 69 (SDKPPCRGCSSYLMEPYIKCAECGPPPFFLCLQCFTRGFEYKKHQSDHTYEIMTSDFP). Residues Cys-17, Cys-20, Cys-31, Cys-34, Cys-42, Cys-45, His-55, and His-59 each contribute to the Zn(2+) site. Residues 70-122 (VLDPSWTAQEEMALLEAVMDCGFGNWQDVANQMCTKTKEECEKHYMKHFINNP) enclose the SANT domain. Glycyl lysine isopeptide (Lys-Gly) (interchain with G-Cter in SUMO2) cross-links involve residues Lys-132 and Lys-138. An SWIRM domain is found at 356–443 (NSGRRSAPPL…LIREGYITKA (88 aa)). The DNA-binding element occupies 426-435 (KTRKIYDFLI).

As to quaternary structure, interacts with GCN5 and NR3C1. Associated with the P/CAF protein in the PCAF complex. Component of the PCAF complex, at least composed of TADA2L/ADA2, TADA3L/ADA3, TAF5L/PAF65-beta, TAF6L/PAF65-alpha, TAF10/TAFII30, TAF12/TAFII20, TAF9/TAFII31 and TRRAP. Component of the ADA2A-containing complex (ATAC), composed of KAT14, KAT2A, TADA2L, TADA3L, ZZ3, MBIP, WDR5, YEATS2, CCDC101 and DR1. Interacts with CCDC134.

The protein localises to the nucleus. The protein resides in the chromosome. In terms of biological role, component of the ATAC complex, a complex with histone acetyltransferase activity on histones H3 and H4. Required for the function of some acidic activation domains, which activate transcription from a distant site. Binds double-stranded DNA. Binds dinucleosomes, probably at the linker region between neighboring nucleosomes. Plays a role in chromatin remodeling. May promote TP53/p53 'Lys-321' acetylation, leading to reduced TP53 stability and transcriptional activity. May also promote XRCC6 acetylation thus facilitating cell apoptosis in response to DNA damage. The polypeptide is Transcriptional adapter 2-alpha (Tada2a) (Rattus norvegicus (Rat)).